The following is a 233-amino-acid chain: uncharacterized protein (233 aa).

Positions 1–10 (MSSKLSKKKL) are enriched in basic residues. The segment at 1–90 (MSSKLSKKKL…KRQKGKNNDR (90 aa)) is disordered. Positions 11–56 (KSLEYRSKKFDKKSQSLEEHEKKVQQKNEELEKKAADKISRDELPE) are enriched in basic and acidic residues. Positions 76 to 85 (KTLKSKRQKG) are enriched in basic residues. The 80-residue stretch at 92–171 (VILFVGNLPK…RKINIELTAG (80 aa)) folds into the RRM domain. Basic and acidic residues-rich tracts occupy residues 194-216 (MRQRVASEEQQAGEEKMARKAVA) and 224-233 (IHPDRLRLLQ). The tract at residues 194–233 (MRQRVASEEQQAGEEKMARKAVADEGLESGIHPDRLRLLQ) is disordered.

Its subcellular location is the nucleus. It is found in the nucleolus. This is an uncharacterized protein from Schizosaccharomyces pombe (strain 972 / ATCC 24843) (Fission yeast).